The primary structure comprises 64 residues: uncharacterized protein (64 aa).

Residues 1–64 (MNNPNIVPPH…QNQPPQRPQY (64 aa)) form a disordered region. Over residues 8-32 (PPHFNQHQQQNHNQNQPPHHMNNPN) the composition is skewed to low complexity.

This is an uncharacterized protein from Dictyostelium discoideum (Social amoeba).